The following is a 535-amino-acid chain: Cytochrome P450 monooxygenase BOA7 (535 aa).

Residues 20 to 37 (SIFLILGFFVLAAILIAW) traverse the membrane as a helical segment. Residues asparagine 65, asparagine 148, asparagine 180, and asparagine 420 are each glycosylated (N-linked (GlcNAc...) asparagine). Cysteine 478 lines the heme pocket.

This sequence belongs to the cytochrome P450 family. Heme is required as a cofactor.

It localises to the membrane. Its pathway is polyketide biosynthesis. Cytochrome P450 monooxygenase; part of the gene cluster B that mediates the biosynthesis of botcinic acid and its botcinin derivatives, acetate-derived polyketides that contribute to virulence when combined with the sesquiterpene botrydial. Botcinic acid and its derivatives have been shown to induce chlorosis and necrosis during host plant infection, but also have antifungal activities. Two polyketide synthases, BOA6 and BOA9, are involved in the biosynthesis of botcinins. BOA6 mediates the formation of the per-methylated tetraketide core by condensation of four units of malonyl-CoA with one unit of acetyl-CoA, which would be methylated in activated methylene groups to yield a bicyclic acid intermediate that could then either be converted to botrylactone derivatives or lose the starter acetate unit through a retro-Claisen type C-C bond cleavage to yield botcinin derivatives. The second polyketide synthase, BOA9, is probably required for the biosynthesis of the tetraketide side chain of botcinins. The methyltransferase (MT) domain within BOA6 is probably responsible for the incorporation of four methyl groups. The trans-enoyl reductase BOA5 might take over the enoyl reductase function of BOA6 that misses an ER domain. The monooxygenases BOA2, BOA3 and BOA4 might be involved in further hydroxylations at C4, C5 and C8, whereas BOA7, close to BOA9, could potentially be involved in the hydroxylation at C4 in the side chain of botcinins. The sequence is that of Cytochrome P450 monooxygenase BOA7 from Botryotinia fuckeliana (strain B05.10) (Noble rot fungus).